A 378-amino-acid chain; its full sequence is Myoglobin (378 aa).

Residue H332 participates in heme binding.

This sequence belongs to the indoleamine 2,3-dioxygenase family. In terms of assembly, homodimer. Requires heme as cofactor.

In terms of biological role, serves a reserve supply of oxygen and facilitates the movement of oxygen within muscles. The sequence is that of Myoglobin from Haliotis madaka (Giant abalone).